A 174-amino-acid chain; its full sequence is Co-chaperone protein HscB homolog (174 aa).

Positions 2-74 constitute a J domain; that stretch reads NYFELFSLLP…IQRAEHLLAL (73 aa).

The protein belongs to the HscB family. In terms of assembly, interacts with HscA and stimulates its ATPase activity.

Co-chaperone involved in the maturation of iron-sulfur cluster-containing proteins. Seems to help targeting proteins to be folded toward HscA. The chain is Co-chaperone protein HscB homolog from Shewanella pealeana (strain ATCC 700345 / ANG-SQ1).